The primary structure comprises 542 residues: CTP synthase (542 aa).

Residues 1–265 (MARYVFITGG…DSEVLSAFGI (265 aa)) form an amidoligase domain region. Serine 13 contributes to the CTP binding site. Serine 13 contributes to the UTP binding site. ATP is bound at residue 14 to 19 (SLGKGI). Position 54 (tyrosine 54) interacts with L-glutamine. Aspartate 71 contributes to the ATP binding site. Mg(2+) contacts are provided by aspartate 71 and glutamate 139. CTP contacts are provided by residues 146-148 (DIE), 186-191 (KTKPTQ), and lysine 222. UTP is bound by residues 186–191 (KTKPTQ) and lysine 222. The Glutamine amidotransferase type-1 domain occupies 291–541 (TIAVVGKYTG…IEAAIEQSRL (251 aa)). Glycine 353 contributes to the L-glutamine binding site. The active-site Nucleophile; for glutamine hydrolysis is the cysteine 380. Residues 381-384 (FGMQ), glutamate 404, and arginine 469 contribute to the L-glutamine site. Residues histidine 514 and glutamate 516 contribute to the active site.

This sequence belongs to the CTP synthase family. In terms of assembly, homotetramer.

The enzyme catalyses UTP + L-glutamine + ATP + H2O = CTP + L-glutamate + ADP + phosphate + 2 H(+). The catalysed reaction is L-glutamine + H2O = L-glutamate + NH4(+). It catalyses the reaction UTP + NH4(+) + ATP = CTP + ADP + phosphate + 2 H(+). Its pathway is pyrimidine metabolism; CTP biosynthesis via de novo pathway; CTP from UDP: step 2/2. With respect to regulation, allosterically activated by GTP, when glutamine is the substrate; GTP has no effect on the reaction when ammonia is the substrate. The allosteric effector GTP functions by stabilizing the protein conformation that binds the tetrahedral intermediate(s) formed during glutamine hydrolysis. Inhibited by the product CTP, via allosteric rather than competitive inhibition. Functionally, catalyzes the ATP-dependent amination of UTP to CTP with either L-glutamine or ammonia as the source of nitrogen. Regulates intracellular CTP levels through interactions with the four ribonucleotide triphosphates. This is CTP synthase from Brucella suis (strain ATCC 23445 / NCTC 10510).